Reading from the N-terminus, the 80-residue chain is Exodeoxyribonuclease 7 small subunit (80 aa).

The protein belongs to the XseB family. Heterooligomer composed of large and small subunits.

Its subcellular location is the cytoplasm. It catalyses the reaction Exonucleolytic cleavage in either 5'- to 3'- or 3'- to 5'-direction to yield nucleoside 5'-phosphates.. Bidirectionally degrades single-stranded DNA into large acid-insoluble oligonucleotides, which are then degraded further into small acid-soluble oligonucleotides. This chain is Exodeoxyribonuclease 7 small subunit, found in Vibrio campbellii (strain ATCC BAA-1116).